Reading from the N-terminus, the 484-residue chain is Cobyric acid synthase (484 aa).

The GATase cobBQ-type domain maps to 246–437; that stretch reads ALRVVVPALP…VHGLFDTPAA (192 aa). Cys-327 (nucleophile) is an active-site residue. Residue His-429 is part of the active site.

Belongs to the CobB/CobQ family. CobQ subfamily.

The protein operates within cofactor biosynthesis; adenosylcobalamin biosynthesis. Catalyzes amidations at positions B, D, E, and G on adenosylcobyrinic A,C-diamide. NH(2) groups are provided by glutamine, and one molecule of ATP is hydrogenolyzed for each amidation. This Paraburkholderia phymatum (strain DSM 17167 / CIP 108236 / LMG 21445 / STM815) (Burkholderia phymatum) protein is Cobyric acid synthase.